The primary structure comprises 269 residues: Sushi domain-containing protein 3 (269 aa).

Positions Met1–Pro23 are disordered. The Extracellular portion of the chain corresponds to Met1–Lys103. A Sushi domain is found at Gly30–Ala93. Cystine bridges form between Cys32-Cys75 and Cys61-Cys91. A helical transmembrane segment spans residues Val104–Leu124. At Thr125–Gly269 the chain is on the cytoplasmic side. Residues Asn171–Cys237 form a disordered region. Gly residues predominate over residues Val176–Pro190.

Its subcellular location is the cell membrane. This is Sushi domain-containing protein 3 (Susd3) from Mus musculus (Mouse).